Reading from the N-terminus, the 468-residue chain is 6-phospho-beta-galactosidase (468 aa).

D-galactose 6-phosphate contacts are provided by Q19, H116, N159, E160, and N297. E160 (proton donor) is an active-site residue. The Nucleophile role is filled by E375. S428, W429, K435, and Y437 together coordinate D-galactose 6-phosphate.

The protein belongs to the glycosyl hydrolase 1 family.

The enzyme catalyses a 6-phospho-beta-D-galactoside + H2O = D-galactose 6-phosphate + an alcohol. It participates in carbohydrate metabolism; lactose degradation; D-galactose 6-phosphate and beta-D-glucose from lactose 6-phosphate: step 1/1. The polypeptide is 6-phospho-beta-galactosidase (Streptococcus pyogenes serotype M3 (strain ATCC BAA-595 / MGAS315)).